The sequence spans 259 residues: UPF0246 protein PST_1170 (259 aa).

The protein belongs to the UPF0246 family.

The sequence is that of UPF0246 protein PST_1170 from Stutzerimonas stutzeri (strain A1501) (Pseudomonas stutzeri).